A 121-amino-acid polypeptide reads, in one-letter code: Small ribosomal subunit protein uS13 (121 aa).

The tract at residues 93–121 (KGLPMRGQRTRTNARTRKGPRRAAQALKK) is disordered.

This sequence belongs to the universal ribosomal protein uS13 family. As to quaternary structure, part of the 30S ribosomal subunit. Forms a loose heterodimer with protein S19. Forms two bridges to the 50S subunit in the 70S ribosome.

Located at the top of the head of the 30S subunit, it contacts several helices of the 16S rRNA. In the 70S ribosome it contacts the 23S rRNA (bridge B1a) and protein L5 of the 50S subunit (bridge B1b), connecting the 2 subunits; these bridges are implicated in subunit movement. Contacts the tRNAs in the A and P-sites. In Burkholderia ambifaria (strain ATCC BAA-244 / DSM 16087 / CCUG 44356 / LMG 19182 / AMMD) (Burkholderia cepacia (strain AMMD)), this protein is Small ribosomal subunit protein uS13.